A 273-amino-acid chain; its full sequence is Putative expansin-B2 (273 aa).

The signal sequence occupies residues Met-1–Cys-29. Asn-36 carries an N-linked (GlcNAc...) asparagine glycan. The 109-residue stretch at Gly-65–Lys-173 folds into the Expansin-like EG45 domain. Intrachain disulfides connect Cys-68/Cys-97, Cys-100/Cys-168, and Cys-105/Cys-111. In terms of domain architecture, Expansin-like CBD spans Asn-186–Ser-269.

Belongs to the expansin family. Expansin B subfamily.

The protein localises to the secreted. Its subcellular location is the cell wall. The protein resides in the membrane. Functionally, may cause loosening and extension of plant cell walls by disrupting non-covalent bonding between cellulose microfibrils and matrix glucans. No enzymatic activity has been found. The protein is Putative expansin-B2 (EXPB2) of Arabidopsis thaliana (Mouse-ear cress).